Here is a 445-residue protein sequence, read N- to C-terminus: Ktr system potassium uptake protein B (445 aa).

12 helical membrane passes run 19–39 (VLAIGFFLTIIIGAVLLMLPI), 46–66 (SWIDALFTAASATTVTGLAVV), 79–99 (VIMGLIQIGGLGFMTFAVLIV), 127–147 (IGLVKVLFLFSISIELIAALI), 161–181 (GLFASLFHAISAFNNAGFSLW), 196–216 (LVITFLFITGGIGFTVLFDVM), 230–250 (LMLTGTLMLNAIAMLTVFILE), 286–306 (FGSMREGTIVFTLLLMFIGAG), 313–333 (GIKLTTFIVILTSVIAYLRGK), 351–371 (ALAVSVTSLFIVFLGIFALTI), 377–397 (FLQIVFETFSAFGTVGLTMGL), and 408–428 (IIIVIMFIGRIGPLTFVFSFA).

It belongs to the TrkH potassium transport family. Ktr (TC 2.A.38.4) subfamily. In terms of assembly, homodimer. Part of the KtrAB complex formed by an octameric catalytic ring of KtrA and a membrane associated dimer of KtrB forming a potassium channel.

It is found in the cell membrane. Integral membrane subunit of the KtrAB potassium uptake transporter. The 2 major potassium transporter complexes KtrAB and KtrCD confer resistance to both suddenly imposed and prolonged osmotic stress. This chain is Ktr system potassium uptake protein B (ktrB), found in Bacillus subtilis (strain 168).